We begin with the raw amino-acid sequence, 145 residues long: D-aminoacyl-tRNA deacylase (145 aa).

A Gly-cisPro motif, important for rejection of L-amino acids motif is present at residues 137 to 138; it reads GP.

It belongs to the DTD family. As to quaternary structure, homodimer.

The protein resides in the cytoplasm. The enzyme catalyses glycyl-tRNA(Ala) + H2O = tRNA(Ala) + glycine + H(+). It catalyses the reaction a D-aminoacyl-tRNA + H2O = a tRNA + a D-alpha-amino acid + H(+). Its function is as follows. An aminoacyl-tRNA editing enzyme that deacylates mischarged D-aminoacyl-tRNAs. Also deacylates mischarged glycyl-tRNA(Ala), protecting cells against glycine mischarging by AlaRS. Acts via tRNA-based rather than protein-based catalysis; rejects L-amino acids rather than detecting D-amino acids in the active site. By recycling D-aminoacyl-tRNA to D-amino acids and free tRNA molecules, this enzyme counteracts the toxicity associated with the formation of D-aminoacyl-tRNA entities in vivo and helps enforce protein L-homochirality. The chain is D-aminoacyl-tRNA deacylase from Erwinia tasmaniensis (strain DSM 17950 / CFBP 7177 / CIP 109463 / NCPPB 4357 / Et1/99).